The primary structure comprises 290 residues: Fructose-bisphosphate aldolase (290 aa).

Serine 51 contacts D-glyceraldehyde 3-phosphate. Residue aspartate 86 is the Proton donor of the active site. Histidine 87, aspartate 107, glutamate 137, and histidine 179 together coordinate Zn(2+). Glycine 180 lines the dihydroxyacetone phosphate pocket. Histidine 208 contacts Zn(2+). Dihydroxyacetone phosphate-binding positions include 209–211 and 230–233; these read GGS and NINT.

It belongs to the class II fructose-bisphosphate aldolase family. Homodimer. It depends on Zn(2+) as a cofactor.

The enzyme catalyses beta-D-fructose 1,6-bisphosphate = D-glyceraldehyde 3-phosphate + dihydroxyacetone phosphate. The protein operates within carbohydrate degradation; glycolysis; D-glyceraldehyde 3-phosphate and glycerone phosphate from D-glucose: step 4/4. Catalyzes the aldol condensation of dihydroxyacetone phosphate (DHAP or glycerone-phosphate) with glyceraldehyde 3-phosphate (G3P) to form fructose 1,6-bisphosphate (FBP) in gluconeogenesis and the reverse reaction in glycolysis. In Ureaplasma parvum serovar 3 (strain ATCC 700970), this protein is Fructose-bisphosphate aldolase (fba).